Here is a 293-residue protein sequence, read N- to C-terminus: Small ribosomal subunit biogenesis GTPase RsgA (293 aa).

One can recognise a CP-type G domain in the interval K63 to L223. Residues S112–D115 and G166–S174 each bind GTP. Zn(2+) contacts are provided by C247, C252, H254, and C260.

It belongs to the TRAFAC class YlqF/YawG GTPase family. RsgA subfamily. In terms of assembly, monomer. Associates with 30S ribosomal subunit, binds 16S rRNA. The cofactor is Zn(2+).

The protein localises to the cytoplasm. In terms of biological role, one of several proteins that assist in the late maturation steps of the functional core of the 30S ribosomal subunit. Helps release RbfA from mature subunits. May play a role in the assembly of ribosomal proteins into the subunit. Circularly permuted GTPase that catalyzes slow GTP hydrolysis, GTPase activity is stimulated by the 30S ribosomal subunit. The protein is Small ribosomal subunit biogenesis GTPase RsgA of Bacillus cytotoxicus (strain DSM 22905 / CIP 110041 / 391-98 / NVH 391-98).